The primary structure comprises 167 residues: Protein-export protein SecB (167 aa).

It belongs to the SecB family. Homotetramer, a dimer of dimers. One homotetramer interacts with 1 SecA dimer.

Its subcellular location is the cytoplasm. In terms of biological role, one of the proteins required for the normal export of preproteins out of the cell cytoplasm. It is a molecular chaperone that binds to a subset of precursor proteins, maintaining them in a translocation-competent state. It also specifically binds to its receptor SecA. The sequence is that of Protein-export protein SecB from Cellvibrio japonicus (strain Ueda107) (Pseudomonas fluorescens subsp. cellulosa).